Reading from the N-terminus, the 142-residue chain is MAKKVTAYIKLQVKAGSANPSPPVGPALGQHGVNIMEFCKAFNARTEKLEKGSPTPVVITVYSDRSFTFETKTPPAAFLLKKAAGIQSGSAKPNKDKVGKVTVAQLQEIAKTKEPDMTGADLDAKVRCIAGSARSMGLVVED.

It belongs to the universal ribosomal protein uL11 family. In terms of assembly, part of the ribosomal stalk of the 50S ribosomal subunit. Interacts with L10 and the large rRNA to form the base of the stalk. L10 forms an elongated spine to which L12 dimers bind in a sequential fashion forming a multimeric L10(L12)X complex. Post-translationally, one or more lysine residues are methylated.

Functionally, forms part of the ribosomal stalk which helps the ribosome interact with GTP-bound translation factors. This chain is Large ribosomal subunit protein uL11, found in Aeromonas hydrophila subsp. hydrophila (strain ATCC 7966 / DSM 30187 / BCRC 13018 / CCUG 14551 / JCM 1027 / KCTC 2358 / NCIMB 9240 / NCTC 8049).